The primary structure comprises 969 residues: RNA polymerase-associated protein RapA (969 aa).

Residues 164–334 enclose the Helicase ATP-binding domain; that stretch reads EVGRRHAPRV…FARLRLLDAD (171 aa). 177–184 is a binding site for ATP; it reads DEVGLGKT. The DEAH box motif lies at 280–283; it reads DEAH. Positions 492–646 constitute a Helicase C-terminal domain; it reads RVNWLLEKVK…TCPTGRAVYD (155 aa).

Belongs to the SNF2/RAD54 helicase family. RapA subfamily. Interacts with the RNAP. Has a higher affinity for the core RNAP than for the holoenzyme. Its ATPase activity is stimulated by binding to RNAP.

Transcription regulator that activates transcription by stimulating RNA polymerase (RNAP) recycling in case of stress conditions such as supercoiled DNA or high salt concentrations. Probably acts by releasing the RNAP, when it is trapped or immobilized on tightly supercoiled DNA. Does not activate transcription on linear DNA. Probably not involved in DNA repair. This chain is RNA polymerase-associated protein RapA, found in Vibrio cholerae serotype O1 (strain ATCC 39315 / El Tor Inaba N16961).